Here is a 2028-residue protein sequence, read N- to C-terminus: Pecanex-like protein 3 (2028 aa).

Transmembrane regions (helical) follow at residues 33-53 (CFHLYVWIFLLIFPFLLYMVL) and 54-74 (PPSLMVAGVYCLVVAVIFATI). A glycan (N-linked (GlcNAc...) asparagine) is linked at Asn-95. The disordered stretch occupies residues 96–116 (STMGEQEEEAAQGESSLPRDP). Ser-127 is subject to Phosphoserine. Thr-129 carries the post-translational modification Phosphothreonine. 2 disordered regions span residues 193–239 (IGDL…PMSP) and 263–625 (LVRT…SHSR). Residues 198-208 (QTPPGVVPDPS) show a composition bias toward pro residues. 2 stretches are compositionally biased toward basic and acidic residues: residues 263–273 (LVRTSSRREQC) and 305–319 (TDRETLSSFKSEKTN). Residue Asn-319 is glycosylated (N-linked (GlcNAc...) asparagine). A Phosphothreonine modification is found at Thr-370. 2 positions are modified to phosphoserine: Ser-392 and Ser-431. Positions 427 to 437 (GSELSPASSLR) are enriched in polar residues. The span at 444–459 (TDSSSSTSCYSPESSQ) shows a compositional bias: low complexity. Residues 488–497 (TQRTPSTASA) show a composition bias toward polar residues. Phosphoserine occurs at positions 505 and 521. 7 helical membrane passes run 793-815 (NIFGVGLSSLVAFLGYLLLLKGF), 819-836 (IWVFQFCLVIASCQYSLL), 852-872 (WVIAYSRPVYFCICCLLIWLL), 880-900 (PFPPVSLYGLTLFSASFFFCA), 903-923 (VATVFTLCFPFVFLLGLLPQV), 946-968 (SPLTAVFSLTRSLLAAALLYGFC), and 980-1000 (HVPVLFSVFCGLLVAMSYHLS). The residue at position 1025 (Ser-1025) is a Phosphoserine. Transmembrane regions (helical) follow at residues 1053–1073 (LVMCVVIAVLTFAVSASTVFI), 1078–1098 (VLGFVLYALAGAVGFFTHYLL), 1244–1264 (FVLTYIAPWQITWGSAFHAFA), and 1280–1300 (LLSGLFSTPLNPLLGSAVFIM). Ser-1697 bears the Phosphoserine mark. Asn-1770 is a glycosylation site (N-linked (GlcNAc...) asparagine). Residues 1845 to 2028 (GLTSLSNHPP…AAQPLLEHQY (184 aa)) form a disordered region. A compositionally biased stretch (pro residues) spans 1890 to 1921 (RPPPLLQWPPPRLPGPPPASPAPTEGPRPSRP). Phosphoserine occurs at positions 1909 and 1955. The span at 1966-1977 (PLDLSLSPDVSS) shows a compositional bias: low complexity. A compositionally biased stretch (polar residues) spans 1978–1987 (EASPARTTQD).

Belongs to the pecanex family.

The protein resides in the membrane. This is Pecanex-like protein 3 from Mus musculus (Mouse).